Here is a 157-residue protein sequence, read N- to C-terminus: Arginine regulator (157 aa).

Belongs to the ArgR family.

Its subcellular location is the cytoplasm. Its pathway is amino-acid degradation; L-arginine degradation via ADI pathway. Regulates the transcription of the arc operon, involved in arginine catabolism. The protein is Arginine regulator (argR1) of Streptococcus pyogenes serotype M3 (strain SSI-1).